The following is a 142-amino-acid chain: Putative pre-16S rRNA nuclease (142 aa).

It belongs to the YqgF nuclease family.

It is found in the cytoplasm. Functionally, could be a nuclease involved in processing of the 5'-end of pre-16S rRNA. This Staphylococcus carnosus (strain TM300) protein is Putative pre-16S rRNA nuclease.